The sequence spans 666 residues: Calmodulin-binding receptor kinase CaMRLK (666 aa).

The signal sequence occupies residues 1–17 (MFLKLFLLLSLVSFSHS). At 18–297 (DSSSTVSCPN…KTHRTNHTPL (280 aa)) the chain is on the extracellular side. N-linked (GlcNAc...) asparagine glycosylation is found at Asn-27, Asn-45, Asn-52, Asn-68, Asn-78, Asn-89, Asn-110, Asn-126, Asn-137, Asn-148, Asn-154, Asn-189, Asn-212, Asn-229, and Asn-261. LRR repeat units follow at residues 79 to 103 (LTRLRVLDLSNNSLDGSLPTWLWSM), 105 to 127 (GLVSVNLSRNRFGGSIRVIPVNG), 130 to 152 (LSAVKELNLSFNRFKHAVNFTGF), 153 to 177 (TNLTTLDLSHNSLGVLPLGLGSLSG), 178 to 197 (LRHLDISRCKINGSVKPISG), 198 to 224 (LKSLDYLDLSENSMNGSFPVDFPNLNH), and 226 to 246 (QFLNLSANRFSGSVGFDKYRK). Residues 298 to 318 (VIGLSSSLGALIIVIFAAAII) form a helical membrane-spanning segment. The segment at 319-337 (LIRRRMKSARTKSRWAISN) is calmodulin binding. Topologically, residues 319–666 (LIRRRMKSAR…LLKDIRTVSR (348 aa)) are cytoplasmic. Residues 395–661 (FGTESVISDG…QQVLGLLKDI (267 aa)) enclose the Protein kinase domain. ATP contacts are provided by residues 401 to 409 (ISDGTCGPL) and Lys-423.

The protein belongs to the protein kinase superfamily. Ser/Thr protein kinase family. In terms of assembly, binds calmodulin (CaM) in a calcium-dependent manner. Interacts with CAM1, but not with CAM8. Mn(2+) serves as cofactor. The cofactor is Mg(2+). In terms of processing, calmodulin (CaM)-independent autophosphorylation. In terms of tissue distribution, expressed in reproductive and vegetative tissues, with higher levels in seedlings and flowers, but not in leaves.

Its subcellular location is the cell membrane. The catalysed reaction is L-seryl-[protein] + ATP = O-phospho-L-seryl-[protein] + ADP + H(+). The enzyme catalyses L-threonyl-[protein] + ATP = O-phospho-L-threonyl-[protein] + ADP + H(+). With respect to regulation, not stimulated by calmodulin (CaM). Its function is as follows. Can phosphorylate the myelin basic protein in vitro. Required for endosperm development in embryos. Maybe involved in auxin and osmotic stress responses. This is Calmodulin-binding receptor kinase CaMRLK from Arabidopsis thaliana (Mouse-ear cress).